A 224-amino-acid polypeptide reads, in one-letter code: Putative O-methyltransferase MMAR_4217 (224 aa).

The segment covering 1-11 (MHGTDSSSDTP) has biased composition (polar residues). The interval 1-20 (MHGTDSSSDTPGQPAPSRAE) is disordered. S-adenosyl-L-methionine-binding positions include Val51, Glu73, 75-76 (GT), Ser81, Asp99, and Ile100. Asp147 serves as a coordination point for substrate. Residue Asp149 participates in S-adenosyl-L-methionine binding.

This sequence belongs to the class I-like SAM-binding methyltransferase superfamily. Cation-dependent O-methyltransferase family.

The polypeptide is Putative O-methyltransferase MMAR_4217 (Mycobacterium marinum (strain ATCC BAA-535 / M)).